Reading from the N-terminus, the 68-residue chain is DNA-directed RNA polymerase subunit omega (68 aa).

This sequence belongs to the RNA polymerase subunit omega family. In terms of assembly, the RNAP catalytic core consists of 2 alpha, 1 beta, 1 beta' and 1 omega subunit. When a sigma factor is associated with the core the holoenzyme is formed, which can initiate transcription.

It carries out the reaction RNA(n) + a ribonucleoside 5'-triphosphate = RNA(n+1) + diphosphate. Promotes RNA polymerase assembly. Latches the N- and C-terminal regions of the beta' subunit thereby facilitating its interaction with the beta and alpha subunits. The sequence is that of DNA-directed RNA polymerase subunit omega from Persephonella marina (strain DSM 14350 / EX-H1).